We begin with the raw amino-acid sequence, 290 residues long: Phosphatidylglycerol--prolipoprotein diacylglyceryl transferase (290 aa).

A run of 7 helical transmembrane segments spans residues 21–41, 60–80, 96–116, 130–150, 198–218, 225–245, and 258–278; these read VSLHWYGLMYLVGFVFAMWLA, LLYAGFLGVFVGGRVGYVLFY, WDGGMSFHGGLMGVILVMFWF, FIAPLIPFGLGAGRLGNFING, SQLYELLLEGVVLFIILNLFI, GAVSGLFLIGYGAFRIIVEAF, and VISMGQILSVPMVVAGIIMMI. A 1,2-diacyl-sn-glycero-3-phospho-(1'-sn-glycerol) is bound at residue Arg143.

The protein belongs to the Lgt family.

It is found in the cell inner membrane. The catalysed reaction is L-cysteinyl-[prolipoprotein] + a 1,2-diacyl-sn-glycero-3-phospho-(1'-sn-glycerol) = an S-1,2-diacyl-sn-glyceryl-L-cysteinyl-[prolipoprotein] + sn-glycerol 1-phosphate + H(+). Its pathway is protein modification; lipoprotein biosynthesis (diacylglyceryl transfer). Catalyzes the transfer of the diacylglyceryl group from phosphatidylglycerol to the sulfhydryl group of the N-terminal cysteine of a prolipoprotein, the first step in the formation of mature lipoproteins. This Serratia proteamaculans (strain 568) protein is Phosphatidylglycerol--prolipoprotein diacylglyceryl transferase.